We begin with the raw amino-acid sequence, 607 residues long: UvrABC system protein C (607 aa).

One can recognise a GIY-YIG domain in the interval 15–94 (ENPGVYLMKN…IKRHRPYFNV (80 aa)). The 36-residue stretch at 204–239 (DQVLKLLIRLMNEASARLDYETAALRRDQIASIKEV) folds into the UVR domain.

Belongs to the UvrC family. As to quaternary structure, interacts with UvrB in an incision complex.

The protein localises to the cytoplasm. In terms of biological role, the UvrABC repair system catalyzes the recognition and processing of DNA lesions. UvrC both incises the 5' and 3' sides of the lesion. The N-terminal half is responsible for the 3' incision and the C-terminal half is responsible for the 5' incision. This Dehalococcoides mccartyi (strain ATCC BAA-2100 / JCM 16839 / KCTC 5957 / BAV1) protein is UvrABC system protein C.